A 225-amino-acid chain; its full sequence is Large ribosomal subunit protein bL25 (225 aa).

Residues 188–225 are disordered; sequence EEIEEAEAEAQATDADTATDDSEQTSEEQAEENKEDKE. Positions 204–217 are enriched in acidic residues; the sequence is TATDDSEQTSEEQA.

It belongs to the bacterial ribosomal protein bL25 family. CTC subfamily. Part of the 50S ribosomal subunit; part of the 5S rRNA/L5/L18/L25 subcomplex. Contacts the 5S rRNA. Binds to the 5S rRNA independently of L5 and L18.

Its function is as follows. This is one of the proteins that binds to the 5S RNA in the ribosome where it forms part of the central protuberance. The chain is Large ribosomal subunit protein bL25 from Exiguobacterium sibiricum (strain DSM 17290 / CCUG 55495 / CIP 109462 / JCM 13490 / 255-15).